We begin with the raw amino-acid sequence, 729 residues long: Transient receptor potential cation channel subfamily V member 5 (729 aa).

Residues 1–327 (MGGFLPKAEG…SFKWNKYGRP (327 aa)) lie on the Cytoplasmic side of the membrane. ANK repeat units follow at residues 44–74 (ILES…DVRQ), 78–107 (LGET…ELVF), 116–145 (AGQT…SVSA), 162–191 (FGEH…DIRA), 195–228 (LGNT…HGDH), and 239–268 (QGLT…HIQW). A helical transmembrane segment spans residues 328–348 (YFCILAALYLLYMICFTTCCV). Residues 349–385 (YRPLKFRGGNRTHSRDITILQQKLLQEAYETREDIIR) lie on the Extracellular side of the membrane. Asn-358 is a glycosylation site (N-linked (GlcNAc...) asparagine). A helical transmembrane segment spans residues 386–408 (LVGELVSIVGAVIILLLEIPDIF). Over 409-419 (RVGASRYFGKT) the chain is Cytoplasmic. Residues 420–442 (ILGGPFHVIIITYASLVLVTMVM) form a helical membrane-spanning segment. At 443-448 (RLTNTN) the chain is on the extracellular side. The chain crosses the membrane as a helical span at residues 449–469 (GEVVPMSFALVLGWCSVMYFT). Over 470-492 (RGFQMLGPFTIMIQKMIFGDLMR) the chain is Cytoplasmic. The helical transmembrane segment at 493 to 513 (FCWLMAVVILGFASAFYIIFQ) threads the bilayer. An intramembrane region (pore-forming) is located at residues 524-544 (YDYPMALFTTFELFLTVIDAP). Asp-542 contacts Ca(2+). A helical membrane pass occupies residues 557–577 (IVNFAFTIIATLLMLNLFIAM). Residues 578–729 (MGDTHWRVAQ…EGDGEEVYHF (152 aa)) are Cytoplasmic-facing. The interval 598 to 602 (VATTV) is interaction with S100A10. The segment at 650 to 653 (VFKN) is involved in Ca(2+)-dependent inactivation. The segment covering 654–665 (SDKEDDQEHPSE) has biased composition (basic and acidic residues). The tract at residues 654–675 (SDKEDDQEHPSEKQPSGAESGT) is disordered. A Phosphothreonine modification is found at Thr-685. Ser-689 is subject to Phosphoserine. The segment at 700-729 (GWEILRQNTLGHLNLGLNLSEGDGEEVYHF) is involved in Ca(2+)-dependent inactivation.

Belongs to the transient receptor (TC 1.A.4) family. TrpV subfamily. TRPV5 sub-subfamily. In terms of assembly, homotetramer and probably heterotetramer with TRPV6. Interacts with TRPV6. Interacts with S100A10 and probably with the ANAX2-S100A10 heterotetramer. The interaction with S100A10 is required for the trafficking to the plasma membrane. Interacts with calmodulin. Interacts with BSPRY, which results in its inactivation. Post-translationally, glycosylated. As to expression, expressed at high levels in kidney, small intestine and pancreas, and at lower levels in testis, prostate, placenta, brain, colon and rectum.

The protein localises to the apical cell membrane. It catalyses the reaction Ca(2+)(in) = Ca(2+)(out). With respect to regulation, activated by WNK3. Its function is as follows. Constitutively active calcium selective cation channel thought to be involved in Ca(2+) reabsorption in kidney and intestine. Required for normal Ca(2+) reabsorption in the kidney distal convoluted tubules. The channel is activated by low internal calcium level and the current exhibits an inward rectification. A Ca(2+)-dependent feedback regulation includes fast channel inactivation and slow current decay. Heteromeric assembly with TRPV6 seems to modify channel properties. TRPV5-TRPV6 heteromultimeric concatemers exhibit voltage-dependent gating. The sequence is that of Transient receptor potential cation channel subfamily V member 5 (TRPV5) from Homo sapiens (Human).